Consider the following 294-residue polypeptide: MANNMREIKSRIKSINQMRQITKAMKLISASKLKKARAQLEETLPYYNKVKETIADILAHSAEVESRFFDIREEKEGKKKAYIVMAGDKGLAGGYNSNIFKLTEHEIGDNKENALLLVAGTTGRSYFSRKEYHVHTEFDYAVQNPTVFRAREITEIILDLYNKQEVDEVYIVYTQMISAISLEPRILKLLPIEISALREDVKADEIVLDQRLKYEPSVTEVLNVLIPKYIKGIMYGTFVEAFTSEQNARMTAMDNATKNADEMLQKLNLYYNRARQATITQEISEIVGGASALE.

The protein belongs to the ATPase gamma chain family. F-type ATPases have 2 components, CF(1) - the catalytic core - and CF(0) - the membrane proton channel. CF(1) has five subunits: alpha(3), beta(3), gamma(1), delta(1), epsilon(1). CF(0) has three main subunits: a, b and c.

It is found in the cell membrane. Produces ATP from ADP in the presence of a proton gradient across the membrane. The gamma chain is believed to be important in regulating ATPase activity and the flow of protons through the CF(0) complex. The protein is ATP synthase gamma chain of Ruminiclostridium cellulolyticum (strain ATCC 35319 / DSM 5812 / JCM 6584 / H10) (Clostridium cellulolyticum).